Here is a 456-residue protein sequence, read N- to C-terminus: Exodeoxyribonuclease 7 large subunit (456 aa).

This sequence belongs to the XseA family. In terms of assembly, heterooligomer composed of large and small subunits.

The protein resides in the cytoplasm. The catalysed reaction is Exonucleolytic cleavage in either 5'- to 3'- or 3'- to 5'-direction to yield nucleoside 5'-phosphates.. Functionally, bidirectionally degrades single-stranded DNA into large acid-insoluble oligonucleotides, which are then degraded further into small acid-soluble oligonucleotides. The polypeptide is Exodeoxyribonuclease 7 large subunit (Shigella boydii serotype 18 (strain CDC 3083-94 / BS512)).